The primary structure comprises 454 residues: ABSCISIC ACID-INSENSITIVE 5-like protein 6 (454 aa).

Phosphoserine is present on residues Ser-32, Ser-55, and Ser-126. Thr-169 carries the post-translational modification Phosphothreonine. The region spanning 372 to 435 (IERRQKRMIK…KNQLLEPLRQ (64 aa)) is the bZIP domain. Residues 374–393 (RRQKRMIKNRESAARSRARK) form a basic motif region. Positions 400–414 (LEAEIAQLKELNEEL) are leucine-zipper.

It belongs to the bZIP family. ABI5 subfamily. DNA-binding heterodimer. Interacts with ABI3 and the AFP proteins AFP1, AFP2, AFP3 and AFP4. Expressed in roots and flowers.

It localises to the nucleus. Binds to the ABA-responsive element (ABRE). Mediates stress-responsive ABA signaling. This chain is ABSCISIC ACID-INSENSITIVE 5-like protein 6 (ABF3), found in Arabidopsis thaliana (Mouse-ear cress).